Consider the following 1054-residue polypeptide: FERM, ARHGEF and pleckstrin domain-containing protein 2 (1054 aa).

The region spanning 44-324 is the FERM domain; the sequence is LHLRVKLLDN…EYHTFFRLLD (281 aa). Residues Ser389 and Ser439 each carry the phosphoserine modification. A disordered region spans residues 421 to 527; it reads EFKDSSSSLT…GAGMDCEEPR (107 aa). Over residues 468-492 the composition is skewed to low complexity; that stretch reads PGPGLSTKSPQPSPSSRKSPLSLSP. Residues 535 to 726 form the DH domain; the sequence is EAYFIVKEIL…TEVTTTLQHI (192 aa). A PH 1 domain is found at 755–852; it reads EFIREGCLHK…WMLDLNSAIQ (98 aa). The disordered stretch occupies residues 856–894; the sequence is SGGDTAPALPGRTVCTRPPRSPNEVSLEQESEDDARGVR. A PH 2 domain is found at 929-1026; the sequence is ENQLSGYLLR…WMEVIQGASS (98 aa). The interval 1029–1054 is disordered; sequence GRAPSIVQDGPQPSSGLEGMVRGKEE.

In terms of assembly, interacts with PLXNA1. Interaction with PLXNA1 or PIP5K1C lowers its guanine nucleotide exchange activity. Dissociates from PLXNA1 when SEMA3A binds to the receptor. Interacts with PIP5K1C via its FERM domain. The interaction with PIP5K1C is enhanced by SEMA3A binding. Interacts with RAC1.

Its function is as follows. Functions as a guanine nucleotide exchange factor that activates RAC1. May have relatively low activity. Plays a role in the response to class 3 semaphorins and remodeling of the actin cytoskeleton. Plays a role in TNFSF11-mediated osteoclast differentiation, especially in podosome rearrangement and reorganization of the actin cytoskeleton. Regulates the activation of ITGB3, integrin signaling and cell adhesion. The sequence is that of FERM, ARHGEF and pleckstrin domain-containing protein 2 (FARP2) from Homo sapiens (Human).